The chain runs to 265 residues: Secreted RxLR effector protein 16 (265 aa).

A signal peptide spans 1-19; the sequence is MRGAFYIAIALLIVRSRTA. The RxLR-dEER signature appears at 46-61; it reads RYLRGGLALSATNEER. N-linked (GlcNAc...) asparagine glycans are attached at residues N170, N219, and N240.

It belongs to the RxLR effector family. In terms of processing, N-glycosylated. The putative N-glycosylation site at position 240 is essential for cell death-inducing activity.

The protein localises to the secreted. It is found in the host nucleus. In terms of biological role, effector that acts as an elicitor that induces cell death and promotes ROS accumulation in Nicotian benthamiana. RxLR16-triggered cell death is dependent on SGT1, HSP90 and RAR1, but independent of the somatic embryogenesis receptor-like kinase SERK3/BAK1, indicating that it acts independently of the detection of cell surface pattern recognition receptors. Enhances the expressional levels of defense-associated genes involved in the salicylic acid-, jasmonate acid-, and ethylene-mediated signal transduction, resulting in disease resistance. However, as some other Plasmopara viticola RxLR effectors including RxLR1, RxLR10, RxLR30 and RxLR25, can suppress defense responses and disease resistance induced by RxLR16, it may not trigger host cell death or immune responses during physiological infection under natural conditions. This Plasmopara viticola (Downy mildew of grapevine) protein is Secreted RxLR effector protein 16.